The chain runs to 333 residues: Electron transfer flavoprotein subunit alpha, mitochondrial (333 aa).

The N-terminal 19 residues, 1–19, are a transit peptide targeting the mitochondrion; it reads MFRAAAPGQLRRATSLLRF. The segment at 20 to 204 is domain I; the sequence is QSTLVIAEHA…GISEWLDQKL (185 aa). Lysine 59 is modified (N6-acetyllysine; alternate). The residue at position 59 (lysine 59) is an N6-succinyllysine; alternate. The residue at position 62 (lysine 62) is an N6-acetyllysine. Lysine 69 is subject to N6-acetyllysine; alternate. Lysine 69 carries the N6-succinyllysine; alternate modification. Lysine 75 is modified (N6-acetyllysine). At lysine 85 the chain carries N6-acetyllysine; alternate. N6-succinyllysine; alternate is present on lysine 85. Threonine 93 carries the post-translational modification Phosphothreonine. Residues lysine 101 and lysine 139 each carry the N6-acetyllysine modification. Position 140 is a phosphoserine (serine 140). Position 158 is an N6-acetyllysine; alternate (lysine 158). Lysine 158 is subject to N6-succinyllysine; alternate. N6-acetyllysine is present on lysine 164. Residue lysine 187 is modified to N6-succinyllysine. Lysine 203 is modified (N6-acetyllysine; alternate). Lysine 203 is modified (N6-succinyllysine; alternate). Residues 205 to 333 form a domain II region; the sequence is TKSDRPELTG…PEMTELLKKK (129 aa). Lysine 216 carries the N6-succinyllysine modification. Arginine 223 contacts FAD. Residues lysine 226 and lysine 232 each carry the N6-acetyllysine; alternate modification. Residues lysine 226 and lysine 232 each carry the N6-succinyllysine; alternate modification. FAD is bound by residues serine 248, 263-266, 281-286, and asparagine 300; these read VGQT and SGAIQH. Lysine 301 bears the N6-succinyllysine mark. 318–319 provides a ligand contact to FAD; sequence DL.

This sequence belongs to the ETF alpha-subunit/FixB family. Heterodimer composed of ETFA and ETFB. Identified in a complex that contains ETFA, ETFB and ETFRF1. Interaction with ETFRF1 promotes dissociation of the bound FAD and loss of electron transfer activity. Interacts with TASOR. FAD serves as cofactor.

Its subcellular location is the mitochondrion matrix. Its function is as follows. Heterodimeric electron transfer flavoprotein that accepts electrons from several mitochondrial dehydrogenases, including acyl-CoA dehydrogenases, glutaryl-CoA and sarcosine dehydrogenase. It transfers the electrons to the main mitochondrial respiratory chain via ETF-ubiquinone oxidoreductase (ETF dehydrogenase). Required for normal mitochondrial fatty acid oxidation and normal amino acid metabolism. The sequence is that of Electron transfer flavoprotein subunit alpha, mitochondrial (ETFA) from Bos taurus (Bovine).